Here is a 2342-residue protein sequence, read N- to C-terminus: Outer kinetochore KNL1 complex subunit KNL1 (2342 aa).

The segment at 1-56 is disordered; that stretch reads MDGVSSEANEENDNIERPVRRRHSSILKPPRSPLQDLRGGNERVQESNALRNKKNS. A may mediate oligomerization region spans residues 1–250; the sequence is MDGVSSEANE…FNDFIKRLKT (250 aa). The tract at residues 1-728 is interaction with BUB1 and BUB1B; it reads MDGVSSEANE…QSLFSTTKPL (728 aa). Interaction with microtubules stretches follow at residues 17–34 and 53–80; these read RPVR…RSPL and KKNS…VRKS. The segment at 23–80 is interaction with PP1CA; contains the protein phosphatase 1 (PP1) interaction motifs SILK, RVXF and phi-phi; that stretch reads HSSILKPPRSPLQDLRGGNERVQESNALRNKKNSRRVSFADTIKVFQTESHMKIVRKS. The residue at position 24 (Ser24) is a Phosphoserine; by AURKB. At Ser32 the chain carries Phosphoserine. Ser60 carries the phosphoserine; by AURKB modification. The tract at residues 174 to 190 is interaction with BUB1; the sequence is ENQMDLTSSHTVMITKG. The segment at 210–226 is interaction with BUB1B; that stretch reads ANLKLHTEDSRMKKEVN. Thr539 carries the phosphothreonine modification. 2 positions are modified to phosphoserine: Ser578 and Ser584. The residue at position 586 (Thr586) is a Phosphothreonine. Positions 620–646 are disordered; sequence APESTSESHSQSKSSSDECEEITKSRN. Over residues 622–633 the composition is skewed to low complexity; that stretch reads ESTSESHSQSKS. A Phosphoserine modification is found at Ser767. Residues 855–1201 are 2 X 104 AA approximate repeats; that stretch reads EDESVQKPKF…VTDSHTVFID (347 aa). The stretch at 885 to 989 is repeat 1; sequence DKTIVFSEDD…MTESHTVFID (105 aa). Thr901 bears the Phosphothreonine mark. Ser956, Ser1039, Ser1076, and Ser1088 each carry phosphoserine. Repeat 2 spans residues 1099–1201; sequence DKTIVFSENH…VTDSHTVFID (103 aa). Ser1448 carries the phosphoserine modification. Residues 1639–1662 form a disordered region; sequence SNAKDSRDEENKKSHNGAETTSLP. Over residues 1642–1651 the composition is skewed to basic and acidic residues; sequence KDSRDEENKK. Phosphoserine is present on residues Ser1675 and Ser1773. The Nuclear localization signal motif lies at 1789-1803; the sequence is TWVQEEEDIHKEKKI. Ser1831 is modified (phosphoserine). Ser1831 and Ser1834 each carry phosphoserine; by TTK. 2 positions are modified to phosphoserine: Ser1845 and Ser1860. The required for interaction with ZWINT stretch occupies residues 1981-2108; that stretch reads KMRHCSDKEL…LLELEVQKEQ (128 aa). The stretch at 2024–2133 forms a coiled coil; sequence VQSAQNEREK…EELLDQLSLS (110 aa). Positions 2091–2311 are interaction with NSL1, DSN1 and required for assembly into the outer kinetochore; the sequence is EEEELQRNLL…GNTSQDDIAT (221 aa).

Component of the KNL1 complex composed of KNL1 and ZWINT. Part of the ten-subunit outer kinetochore KMN network that includes the KNL1, MIS12 and NDC80 complexes; a bioriented kinetochore contains approximately 150 copies of the network. Interacts (via C-terminus) with the MIS12 complex subunits NSL1 (via C-terminus), PMF1 and DSN1; the interaction is direct. Interacts (via N-terminal region) with BUB1B (via BUB1 N-terminal domain); the interaction is direct and is required for cell cycle arrest upon activation of the mitotic spindle assembly checkpoint. Interacts (via N-terminal region) with BUB1 (via BUB1 N-terminal domain); the interaction is direct. Interacts with the protein phosphatase PP1 subunit PPP1CA; the interaction is direct and mutually exclusive with binding to microtubules. Interacts with the protein phosphatase PP1 subunit PPP1CC; the interaction is direct and mutually exclusive with binding to microtubules. Post-translationally, phosphorylation by AURKB negatively regulates its interaction with protein phosphatase 1 (PP1) subunit PPP1CA and with microtubules. Highly expressed in testis, where it is localized in germ cells, in particular in spermatocytes and in the pre-acrosome of round spermatids. Detected in the acrosome of ejaculated spermatozoa. Detected in adult thymus, bone marrow, colon, small intestine, appendix and placenta, and in fetal liver and thymus.

It is found in the nucleus. Its subcellular location is the chromosome. The protein localises to the centromere. It localises to the kinetochore. The protein resides in the cytoplasm. In terms of biological role, acts as a component of the outer kinetochore KNL1 complex that serves as a docking point for spindle assembly checkpoint components and mediates microtubule-kinetochore interactions. Kinetochores, consisting of a centromere-associated inner segment and a microtubule-contacting outer segment, play a crucial role in chromosome segregation by mediating the physical connection between centromeric DNA and spindle microtubules. The outer kinetochore is made up of the ten-subunit KMN network, comprising the MIS12, NDC80 and KNL1 complexes, and auxiliary microtubule-associated components; together they connect the outer kinetochore with the inner kinetochore, bind microtubules, and mediate interactions with mitotic checkpoint proteins that delay anaphase until chromosomes are bioriented on the spindle. Required for kinetochore binding by a distinct subset of kMAPs (kinetochore-bound microtubule-associated proteins) and motors. Acts in coordination with CENPK to recruit the NDC80 complex to the outer kinetochore. Can bind either to microtubules or to the protein phosphatase 1 (PP1) catalytic subunits PPP1CA and PPP1CC (via overlapping binding sites), it has higher affinity for PP1. Recruits MAD2L1 to the kinetochore and also directly links BUB1 and BUB1B to the kinetochore. In addition to orienting mitotic chromosomes, it is also essential for alignment of homologous chromosomes during meiotic metaphase I. In meiosis I, required to activate the spindle assembly checkpoint at unattached kinetochores to correct erroneous kinetochore-microtubule attachments. This chain is Outer kinetochore KNL1 complex subunit KNL1, found in Homo sapiens (Human).